The chain runs to 717 residues: Nuclear factor of activated T-cells, cytoplasmic 1 (717 aa).

A disordered region spans residues 1–38 (MPNTSFPVPSKFPLGPPAAVCGSGETLRPAPPSGGTMK). The segment at 120–125 (PRIEIT) is calcineurin-binding. A transactivation domain A (TAD-A) region spans residues 128–220 (LGLHHGSGQF…CVSPKTTDPE (93 aa)). Positions 202–298 (PQTSPWQSPC…PHGSPRVSVT (97 aa)) are disordered. The segment covering 203–216 (QTSPWQSPCVSPKT) has biased composition (polar residues). 2 repeat units span residues 205–221 (SPWQSPCVSPKTTDPEE) and 235–251 (SPRHSPSTSPRASITEE). The segment at 205 to 300 (SPWQSPCVSP…GSPRVSVTED (96 aa)) is 3 X SP repeats. Serine 235 and serine 239 each carry phosphoserine. Residues 238–250 (HSPSTSPRASITE) are compositionally biased toward polar residues. Serine 247 is modified (phosphoserine; by PKA). The Nuclear localization signal motif lies at 267–269 (KRK). Phosphoserine; by PKA occurs at positions 271 and 296. The stretch at 284 to 300 (SPTPSPHGSPRVSVTED) is repeat 3. The Nuclear export signal motif lies at 312-323 (SAIVAAINALTT). The 183-residue stretch at 411 to 593 (PSLPALDWQL…NPIECSQRSA (183 aa)) folds into the RHD domain. A DNA-binding region spans residues 440 to 447 (RAHYETEG). Positions 683 to 685 (KRK) match the Nuclear localization signal motif.

Member of the multicomponent NFATC transcription complex that consists of at least two components, a pre-existing cytoplasmic component NFATC2 and an inducible nuclear component NFATC1. Other members such as NFATC4, NFATC3 or members of the activating protein-1 family, MAF, GATA4 and Cbp/p300 can also bind the complex. NFATC proteins bind to DNA as monomers. Interacts with HOMER2 and HOMER3; this interaction may compete with calcineurin/PPP3CA-binding and hence prevent NFATC1 dephosphorylation and activation. Interacts with TLE6/GRG6. In terms of processing, phosphorylated by NFATC-kinase and GSK3B; phosphorylation induces NFATC1 nuclear exit and dephosphorylation by calcineurin promotes nuclear import. Phosphorylation by PKA and DYRK2 negatively modulates nuclear accumulation, and promotes subsequent phosphorylation by GSK3B or casein kinase 1. As to expression, expressed in the submandibular gland (at protein level). Expressed in basal epidermal cells (at protein level). Expressed in spleen, skeletal muscle and skin. Express in the lung and thymus. Weakly expressed in heart, brain, liver and kidney. Not expressed in testis. Expressed in osteoclasts. Also expressed during TNFSF11/RANKL-induced differentiation of bone marrow-derived macrophages to osteoclasts.

It is found in the cytoplasm. The protein localises to the nucleus. Functionally, plays a role in the inducible expression of cytokine genes in T-cells, especially in the induction of the IL-2 or IL-4 gene transcription. Also controls gene expression in embryonic cardiac cells. Could regulate not only the activation and proliferation but also the differentiation and programmed death of T-lymphocytes as well as lymphoid and non-lymphoid cells. Required for osteoclastogenesis and regulates many genes important for osteoclast differentiation and function. The protein is Nuclear factor of activated T-cells, cytoplasmic 1 (Nfatc1) of Mus musculus (Mouse).